Here is a 228-residue protein sequence, read N- to C-terminus: Cytidylate kinase (228 aa).

17–25 (GPTASGKGT) lines the ATP pocket.

The protein belongs to the cytidylate kinase family. Type 1 subfamily.

The protein resides in the cytoplasm. It catalyses the reaction CMP + ATP = CDP + ADP. It carries out the reaction dCMP + ATP = dCDP + ADP. This Burkholderia vietnamiensis (strain G4 / LMG 22486) (Burkholderia cepacia (strain R1808)) protein is Cytidylate kinase.